We begin with the raw amino-acid sequence, 499 residues long: MRNGTLLLAALLAVFILAGSSAAADVGVELDKNNTKPVYNSTLRVKVIAKAGNQNVQNAVATVKVPEGLVLQDYYTAQGYYDLETGTWEIGDIPAYEERSLTLVCLLNRTGNVTVTANVTADGDENPANNNAQLKFRVRGIADLELNVTSSKQSARLGDTVTFNVKLKNRGPHAANNINVANFFSGGLAIQSYSYTTGYFDDVAREWILETLDTGEEATLTVVCLVNRTGDLSDYVSVREVDEGDVNVYNNIARASVAVKGTDLDLDLSVSKPRAYQGDVVNVVCRVKNNGPEAAQNARVNLQLPANLQVQNVQVDRGTYSNGVWVIGDLADNEAALLNITARVVSAGNFTVNATAVSPAIDDSNPVNNDDTALVSAAIPKKALKVRIKNNSAVTIRVLLYVNINDHGKITRKTYNFYLKNGLSRDLSLGYFQLGTSALFKQYTYNTNYRPRTVSYENTYNATSVITQRVNVSGVKGRQKAPVVRIATLLLDENGTSLQ.

This is an uncharacterized protein from Methanothermobacter thermautotrophicus (Methanobacterium thermoformicicum).